Here is a 471-residue protein sequence, read N- to C-terminus: Putative multidrug resistance protein MdtD (471 aa).

Residues 1–11 (MTDLPDSTRWQ) are Periplasmic-facing. A helical transmembrane segment spans residues 12–32 (LWIVAFGFFMQSLDTTIVNTA). Topologically, residues 33-48 (LPSMAQSLGESPLHMH) are cytoplasmic. The helical transmembrane segment at 49 to 69 (MVIVSYVLTVAVMLPASGWLA) threads the bilayer. Residues 70–76 (DKVGVRN) lie on the Periplasmic side of the membrane. The chain crosses the membrane as a helical span at residues 77-97 (IFFTAIVLFTLGSLFCALSGT). Residues 98–101 (LNEL) are Cytoplasmic-facing. A helical transmembrane segment spans residues 102–124 (LLARALQGVGGAMMVPVGRLTVM). At 125-137 (KIVPREQYMAAMT) the chain is on the periplasmic side. The chain crosses the membrane as a helical span at residues 138-158 (FVTLPGQVGPLLGPALGGLLV). Over 159 to 164 (EYASWH) the chain is Cytoplasmic. A helical transmembrane segment spans residues 165-185 (WIFLINIPVGIIGAIATLMLM). Residues 186–196 (PNYTMQTRRFD) lie on the Periplasmic side of the membrane. Residues 197–217 (LSGFLLLAVGMAVLTLALDGS) form a helical membrane-spanning segment. At 218-224 (KGTGLSP) the chain is on the cytoplasmic side. The chain crosses the membrane as a helical span at residues 225–245 (LAIAGLVAVGVVALVLYLLHA). Residues 246 to 262 (RNNNRALFSLKLFRTRT) lie on the Periplasmic side of the membrane. A helical membrane pass occupies residues 263-283 (FSLGLAGSFAGRIGSGMLPFM). The Cytoplasmic portion of the chain corresponds to 284-285 (TP). Residues 286–306 (VFLQIGLGFSPFHAGLMMIPM) traverse the membrane as a helical segment. Residues 307–341 (VLGSMGMKRIVVQVVNRFGYRRVLVATTLGLSLVT) lie on the Periplasmic side of the membrane. A helical transmembrane segment spans residues 342-362 (LLFMTTALLGWYYVLPFVLFL). Residues 363-395 (QGMVNSTRFSSMNTLTLKDLPDNLASSGNSLLS) lie on the Cytoplasmic side of the membrane. The helical transmembrane segment at 396 to 416 (MIMQLSMSIGVTIAGLLLGLF) threads the bilayer. At 417 to 430 (GSQHISVDSGTTQT) the chain is on the periplasmic side. A helical membrane pass occupies residues 431–451 (VFMYTWLSMAFIIALPAFIFA). The Cytoplasmic segment spans residues 452-471 (RVPNDTHQNVAISRRKRSAQ).

The protein belongs to the major facilitator superfamily. TCR/Tet family.

The protein resides in the cell inner membrane. This is Putative multidrug resistance protein MdtD from Shigella flexneri.